The following is a 282-amino-acid chain: Putative 23S rRNA (guanine-N(1)-)-methyltransferase YxjB (282 aa).

Zn(2+)-binding residues include C12, C15, C29, and H34. 103 to 104 lines the S-adenosyl-L-methionine pocket; the sequence is EG.

This sequence belongs to the methyltransferase superfamily. RlmA family.

This is Putative 23S rRNA (guanine-N(1)-)-methyltransferase YxjB (yxjB) from Bacillus subtilis (strain 168).